A 423-amino-acid chain; its full sequence is Testin (423 aa).

Disordered regions lie at residues 1 to 21 (MSATHPTRLGTRTKESNACAS) and 138 to 169 (EKQPVAGSEGAQYRKKQLAKQLPAHDQDPSKC). A PET domain is found at 97-204 (MILTNPVAAK…GDVKFPSEMN (108 aa)). Residues 160–169 (PAHDQDPSKC) show a composition bias toward basic and acidic residues. LIM zinc-binding domains follow at residues 236–299 (YSCY…CDSE), 301–361 (PRCA…NHAV), and 364–423 (QGCH…RMMS).

It belongs to the prickle / espinas / testin family. As to quaternary structure, interacts via LIM domain 1 with ZYX. Interacts (via LIM domain 3) with ENAH and VASP. Interacts with ALKBH4, talin, actin, alpha-actinin, GRIP1 and PXN. Interacts (via LIM domain 2) with ACTL7A (via N-terminus). Heterodimer with ACTL7A; the heterodimer interacts with ENAH to form a heterotrimer. As to expression, detected at the acrosome of round spermatids (at protein level). Isoform TES1 transcript is highly expressed in adult testis and detected at low levels in other tissues. Isoform TES2 transcript is highly expressed in testis, kidney and spleen; intermediate in thymus, submaxillary gland and lung; detected at low levels in other tissues.

The protein resides in the cytoplasm. It localises to the cell junction. Its subcellular location is the focal adhesion. Its function is as follows. Scaffold protein that may play a role in cell adhesion, cell spreading and in the reorganization of the actin cytoskeleton. Plays a role in the regulation of cell proliferation. May act as a tumor suppressor. The sequence is that of Testin (Tes) from Mus musculus (Mouse).